A 212-amino-acid chain; its full sequence is Pyridoxine/pyridoxamine 5'-phosphate oxidase (212 aa).

FMN contacts are provided by residues 61-66, 76-77, Lys83, and Gln105; these read RSVLLK and YT. Position 66 (Lys66) interacts with substrate. Tyr123, Arg127, and Ser131 together coordinate substrate. Residues 140-141 and Trp185 contribute to the FMN site; that span reads QS. 191 to 193 lines the substrate pocket; it reads RLH. Arg195 provides a ligand contact to FMN.

It belongs to the pyridoxamine 5'-phosphate oxidase family. Homodimer. FMN serves as cofactor.

The catalysed reaction is pyridoxamine 5'-phosphate + O2 + H2O = pyridoxal 5'-phosphate + H2O2 + NH4(+). It carries out the reaction pyridoxine 5'-phosphate + O2 = pyridoxal 5'-phosphate + H2O2. The protein operates within cofactor metabolism; pyridoxal 5'-phosphate salvage; pyridoxal 5'-phosphate from pyridoxamine 5'-phosphate: step 1/1. It participates in cofactor metabolism; pyridoxal 5'-phosphate salvage; pyridoxal 5'-phosphate from pyridoxine 5'-phosphate: step 1/1. Catalyzes the oxidation of either pyridoxine 5'-phosphate (PNP) or pyridoxamine 5'-phosphate (PMP) into pyridoxal 5'-phosphate (PLP). This is Pyridoxine/pyridoxamine 5'-phosphate oxidase from Dichelobacter nodosus (strain VCS1703A).